We begin with the raw amino-acid sequence, 435 residues long: UPF0597 protein ASA_0240 (435 aa).

This sequence belongs to the UPF0597 family.

This chain is UPF0597 protein ASA_0240, found in Aeromonas salmonicida (strain A449).